We begin with the raw amino-acid sequence, 358 residues long: Methylthioribose-1-phosphate isomerase (358 aa).

Substrate is bound by residues 54–56, R96, and Q205; that span reads RGA. Catalysis depends on D246, which acts as the Proton donor. Position 256-257 (256-257) interacts with substrate; the sequence is NK.

Belongs to the eIF-2B alpha/beta/delta subunits family. MtnA subfamily.

The catalysed reaction is 5-(methylsulfanyl)-alpha-D-ribose 1-phosphate = 5-(methylsulfanyl)-D-ribulose 1-phosphate. The protein operates within amino-acid biosynthesis; L-methionine biosynthesis via salvage pathway; L-methionine from S-methyl-5-thio-alpha-D-ribose 1-phosphate: step 1/6. In terms of biological role, catalyzes the interconversion of methylthioribose-1-phosphate (MTR-1-P) into methylthioribulose-1-phosphate (MTRu-1-P). The chain is Methylthioribose-1-phosphate isomerase from Pseudomonas savastanoi pv. phaseolicola (strain 1448A / Race 6) (Pseudomonas syringae pv. phaseolicola (strain 1448A / Race 6)).